The primary structure comprises 425 residues: Peroxisomal membrane protein PEX14 (425 aa).

Disordered stretches follow at residues 49–89 (RSQG…YRNA) and 247–425 (DEPI…AAQS). Positions 56 to 76 (SSSVASQVSSYSPSASQSSVA) are enriched in low complexity. Positions 89 to 97 (APPLPERDW) match the SH3-binding motif. Residues 256–297 (PSLTTGANSLTSESSGRSSIPHSQSVPIRTQLTTPPSDSDTS) show a composition bias toward polar residues. Basic and acidic residues-rich tracts occupy residues 315-324 (DILRKEKNRT) and 333-366 (LGKD…PEED).

Belongs to the peroxin-14 family. Interacts with PEX13 (via SH3 domain); forming the PEX13-PEX14 docking complex. Interacts with PEX5 (via WxxxF/Y motifs). Interacts with PEX20 (via WxxxF/Y motifs). Interacts with PEX3, PEX7, PEX8 and PEX17. Phosphorylated on serine or threonine residues.

It is found in the peroxisome membrane. Its function is as follows. Component of the PEX13-PEX14 docking complex, a translocon channel that specifically mediates the import of peroxisomal cargo proteins bound to PEX5 or PEX20 receptors. The PEX13-PEX14 docking complex forms a large import pore which can be opened to a diameter of about 9 nm. Mechanistically, PEX5 (or PEX20) receptor along with cargo proteins associates with the PEX14 subunit of the PEX13-PEX14 docking complex in the cytosol, leading to the insertion of the receptor into the organelle membrane with the concomitant translocation of the cargo into the peroxisome matrix. This chain is Peroxisomal membrane protein PEX14, found in Komagataella pastoris (Yeast).